A 597-amino-acid chain; its full sequence is Elongation factor 4 (597 aa).

A tr-type G domain is found at 2-184 (NNIRNFSIIA…ALIAKVPPPK (183 aa)). GTP contacts are provided by residues 14–19 (DHGKST) and 131–134 (NKID).

It belongs to the TRAFAC class translation factor GTPase superfamily. Classic translation factor GTPase family. LepA subfamily.

It localises to the cell inner membrane. It catalyses the reaction GTP + H2O = GDP + phosphate + H(+). Required for accurate and efficient protein synthesis under certain stress conditions. May act as a fidelity factor of the translation reaction, by catalyzing a one-codon backward translocation of tRNAs on improperly translocated ribosomes. Back-translocation proceeds from a post-translocation (POST) complex to a pre-translocation (PRE) complex, thus giving elongation factor G a second chance to translocate the tRNAs correctly. Binds to ribosomes in a GTP-dependent manner. This chain is Elongation factor 4, found in Herminiimonas arsenicoxydans.